The primary structure comprises 488 residues: UDP-N-acetylmuramoyl-L-alanyl-D-glutamate--2,6-diaminopimelate ligase (488 aa).

Serine 29 provides a ligand contact to UDP-N-acetyl-alpha-D-muramoyl-L-alanyl-D-glutamate. Residue 108 to 114 (GTSGKTS) participates in ATP binding. Residues 150 to 151 (TT), serine 177, glutamine 183, and arginine 185 each bind UDP-N-acetyl-alpha-D-muramoyl-L-alanyl-D-glutamate. Residue lysine 217 is modified to N6-carboxylysine. Meso-2,6-diaminopimelate is bound by residues arginine 381, 405–408 (DNPR), glycine 453, and glutamate 457. The short motif at 405–408 (DNPR) is the Meso-diaminopimelate recognition motif element.

This sequence belongs to the MurCDEF family. MurE subfamily. It depends on Mg(2+) as a cofactor. Carboxylation is probably crucial for Mg(2+) binding and, consequently, for the gamma-phosphate positioning of ATP.

The protein resides in the cytoplasm. It carries out the reaction UDP-N-acetyl-alpha-D-muramoyl-L-alanyl-D-glutamate + meso-2,6-diaminopimelate + ATP = UDP-N-acetyl-alpha-D-muramoyl-L-alanyl-gamma-D-glutamyl-meso-2,6-diaminopimelate + ADP + phosphate + H(+). It functions in the pathway cell wall biogenesis; peptidoglycan biosynthesis. Catalyzes the addition of meso-diaminopimelic acid to the nucleotide precursor UDP-N-acetylmuramoyl-L-alanyl-D-glutamate (UMAG) in the biosynthesis of bacterial cell-wall peptidoglycan. The sequence is that of UDP-N-acetylmuramoyl-L-alanyl-D-glutamate--2,6-diaminopimelate ligase from Brucella melitensis biotype 1 (strain ATCC 23456 / CCUG 17765 / NCTC 10094 / 16M).